A 235-amino-acid chain; its full sequence is DNA repair protein RecO (235 aa).

The protein belongs to the RecO family.

In terms of biological role, involved in DNA repair and RecF pathway recombination. The sequence is that of DNA repair protein RecO from Enterobacter sp. (strain 638).